A 583-amino-acid chain; its full sequence is Nuclear hormone receptor family member nhr-31 (583 aa).

Residues 43–77 (DLRTSGATSSSGPATSYIIRPSDKQPTVSSGGSQN) are disordered. The segment covering 46-58 (TSGATSSSGPATS) has biased composition (low complexity). A compositionally biased stretch (polar residues) spans 66 to 77 (KQPTVSSGGSQN). The segment at residues 79–154 (DSVCAVCGDG…AGMDPKAVRP (76 aa)) is a DNA-binding region (nuclear receptor). 2 NR C4-type zinc fingers span residues 82-102 (CAVCGDGIAKLHYGVLACYGC) and 118-142 (CRFSNNCIVDKFQRNSCRYCRFQRC). The NR LBD domain maps to 195-464 (ETRILLMQLM…DNLLAEMFGD (270 aa)).

This sequence belongs to the nuclear hormone receptor family.

It localises to the nucleus. In terms of biological role, orphan nuclear receptor. The chain is Nuclear hormone receptor family member nhr-31 (nhr-31) from Caenorhabditis elegans.